We begin with the raw amino-acid sequence, 308 residues long: Methionyl-tRNA formyltransferase (308 aa).

109–112 (SLLP) contributes to the (6S)-5,6,7,8-tetrahydrofolate binding site.

It belongs to the Fmt family.

The enzyme catalyses L-methionyl-tRNA(fMet) + (6R)-10-formyltetrahydrofolate = N-formyl-L-methionyl-tRNA(fMet) + (6S)-5,6,7,8-tetrahydrofolate + H(+). Functionally, attaches a formyl group to the free amino group of methionyl-tRNA(fMet). The formyl group appears to play a dual role in the initiator identity of N-formylmethionyl-tRNA by promoting its recognition by IF2 and preventing the misappropriation of this tRNA by the elongation apparatus. The protein is Methionyl-tRNA formyltransferase of Methylobacillus flagellatus (strain ATCC 51484 / DSM 6875 / VKM B-1610 / KT).